Consider the following 677-residue polypeptide: Methionine--tRNA ligase (677 aa).

A 'HIGH' region motif is present at residues 15 to 25; the sequence is PYANGSIHLGH. Cysteine 146, cysteine 149, cysteine 159, and cysteine 162 together coordinate Zn(2+). A 'KMSKS' region motif is present at residues 333–337; that stretch reads KMSKS. Lysine 336 provides a ligand contact to ATP. In terms of domain architecture, tRNA-binding spans 575 to 677; it reads DFAKIDLRVA…DGAKPGQQVK (103 aa).

It belongs to the class-I aminoacyl-tRNA synthetase family. MetG type 1 subfamily. In terms of assembly, homodimer. It depends on Zn(2+) as a cofactor.

The protein localises to the cytoplasm. It carries out the reaction tRNA(Met) + L-methionine + ATP = L-methionyl-tRNA(Met) + AMP + diphosphate. In terms of biological role, is required not only for elongation of protein synthesis but also for the initiation of all mRNA translation through initiator tRNA(fMet) aminoacylation. The protein is Methionine--tRNA ligase of Salmonella paratyphi B (strain ATCC BAA-1250 / SPB7).